The sequence spans 859 residues: DNA mismatch repair protein MutS (859 aa).

G618 to S625 provides a ligand contact to ATP.

Belongs to the DNA mismatch repair MutS family.

Its function is as follows. This protein is involved in the repair of mismatches in DNA. It is possible that it carries out the mismatch recognition step. This protein has a weak ATPase activity. The polypeptide is DNA mismatch repair protein MutS (Shewanella halifaxensis (strain HAW-EB4)).